We begin with the raw amino-acid sequence, 397 residues long: Class V chitinase CHIT5 (397 aa).

Residues 1–18 form the signal peptide; sequence MIIKLLVALIHYLHETMA. The GH18 domain maps to 54–397; the sequence is GVRAAYWPAW…SKQASNAWGY (344 aa). N-linked (GlcNAc...) asparagine glycosylation is found at Asn-128 and Asn-147. The active-site Proton donor is the Glu-166. N-linked (GlcNAc...) asparagine glycans are attached at residues Asn-193, Asn-209, Asn-247, and Asn-261.

The protein belongs to the glycosyl hydrolase 18 family. Chitinase class V subfamily.

It carries out the reaction Random endo-hydrolysis of N-acetyl-beta-D-glucosaminide (1-&gt;4)-beta-linkages in chitin and chitodextrins.. It participates in glycan degradation; chitin degradation. Its function is as follows. Possesses chitinase activity in vitro toward glycol chitin, carboxymethyl-chitin, colloidal chitin, and the chitin oligosaccharides (N-acetylglucosamine) (GlcNAc)6 and (GlcNAc)5. Hydrolyzes (GlcNAc)6 into (GlcNAc)4 and (GlcNAc)2, or two (GlcNAc)3 molecules. Has the capacity to inhibit hyphal growth of the fungus Trichoderma viride in an agar-plate bioassay. Involved in symbiotic signaling. Required for root hair infection threads (ITs) elongation and nodule development. Possesses Nod factor (NF) hydrolase activity. NFs are lipo-chitooligosaccharide signaling molecules produced by nitrogen-fixing rhizobia to initiate nodulation (symbiosis) on the roots of legumes. Modulates NF levels and signaling to complete transition of infected nodules to functional nitrogen-fixing organs. This Lotus japonicus (Lotus corniculatus var. japonicus) protein is Class V chitinase CHIT5.